We begin with the raw amino-acid sequence, 247 residues long: Aspartate/glutamate leucyltransferase (247 aa).

Belongs to the R-transferase family. Bpt subfamily.

The protein localises to the cytoplasm. It catalyses the reaction N-terminal L-glutamyl-[protein] + L-leucyl-tRNA(Leu) = N-terminal L-leucyl-L-glutamyl-[protein] + tRNA(Leu) + H(+). The catalysed reaction is N-terminal L-aspartyl-[protein] + L-leucyl-tRNA(Leu) = N-terminal L-leucyl-L-aspartyl-[protein] + tRNA(Leu) + H(+). Functionally, functions in the N-end rule pathway of protein degradation where it conjugates Leu from its aminoacyl-tRNA to the N-termini of proteins containing an N-terminal aspartate or glutamate. The polypeptide is Aspartate/glutamate leucyltransferase (Chromohalobacter salexigens (strain ATCC BAA-138 / DSM 3043 / CIP 106854 / NCIMB 13768 / 1H11)).